The sequence spans 681 residues: Potassium-transporting ATPase ATP-binding subunit (681 aa).

The next 4 helical transmembrane spans lie at 30-50, 59-79, 216-236, and 255-275; these read LLVY…FFGI, LAIA…EAIA, ILLV…LPFT, and IALL…SIGI. Aspartate 306 functions as the 4-aspartylphosphate intermediate in the catalytic mechanism. Residues aspartate 343, glutamate 347, 376–383, and lysine 394 contribute to the ATP site; that span reads FTATTRMS. Residues aspartate 517 and aspartate 521 each coordinate Mg(2+). The next 3 helical transmembrane spans lie at 587–607, 615–635, and 661–681; these read FAII…LNLM, AILS…PLSL, and LVAP…LGIV.

Belongs to the cation transport ATPase (P-type) (TC 3.A.3) family. Type IA subfamily. The system is composed of three essential subunits: KdpA, KdpB and KdpC.

Its subcellular location is the cell membrane. It catalyses the reaction K(+)(out) + ATP + H2O = K(+)(in) + ADP + phosphate + H(+). Part of the high-affinity ATP-driven potassium transport (or Kdp) system, which catalyzes the hydrolysis of ATP coupled with the electrogenic transport of potassium into the cytoplasm. This subunit is responsible for energy coupling to the transport system and for the release of the potassium ions to the cytoplasm. This chain is Potassium-transporting ATPase ATP-binding subunit, found in Listeria welshimeri serovar 6b (strain ATCC 35897 / DSM 20650 / CCUG 15529 / CIP 8149 / NCTC 11857 / SLCC 5334 / V8).